The sequence spans 128 residues: Aspartate 1-decarboxylase (128 aa).

Ser25 functions as the Schiff-base intermediate with substrate; via pyruvic acid in the catalytic mechanism. A Pyruvic acid (Ser) modification is found at Ser25. A substrate-binding site is contributed by Thr57. The active-site Proton donor is Tyr58. A substrate-binding site is contributed by 73–75; the sequence is GAA.

The protein belongs to the PanD family. Heterooctamer of four alpha and four beta subunits. Pyruvate is required as a cofactor. Is synthesized initially as an inactive proenzyme, which is activated by self-cleavage at a specific serine bond to produce a beta-subunit with a hydroxyl group at its C-terminus and an alpha-subunit with a pyruvoyl group at its N-terminus.

Its subcellular location is the cytoplasm. The catalysed reaction is L-aspartate + H(+) = beta-alanine + CO2. The protein operates within cofactor biosynthesis; (R)-pantothenate biosynthesis; beta-alanine from L-aspartate: step 1/1. Its function is as follows. Catalyzes the pyruvoyl-dependent decarboxylation of aspartate to produce beta-alanine. The sequence is that of Aspartate 1-decarboxylase from Ruminiclostridium cellulolyticum (strain ATCC 35319 / DSM 5812 / JCM 6584 / H10) (Clostridium cellulolyticum).